The sequence spans 261 residues: Indole-3-glycerol phosphate synthase (261 aa).

Belongs to the TrpC family.

It catalyses the reaction 1-(2-carboxyphenylamino)-1-deoxy-D-ribulose 5-phosphate + H(+) = (1S,2R)-1-C-(indol-3-yl)glycerol 3-phosphate + CO2 + H2O. It participates in amino-acid biosynthesis; L-tryptophan biosynthesis; L-tryptophan from chorismate: step 4/5. The polypeptide is Indole-3-glycerol phosphate synthase (Campylobacter curvus (strain 525.92)).